The primary structure comprises 66 residues: Alpha-conotoxin GIB (66 aa).

Residues 1 to 21 (MGMRMMFTVFLLVVLATTVVS) form the signal peptide. The propeptide occupies 22–49 (FPSERASDGRDDTAKDEGSDMEKLVEKK). 2 cysteine pairs are disulfide-bonded: Cys51–Cys56 and Cys52–Cys62. Glycine amide is present on Gly64.

Belongs to the conotoxin A superfamily. As to expression, expressed by the venom duct.

The protein localises to the secreted. Functionally, alpha-conotoxins act on postsynaptic membranes, they bind to the nicotinic acetylcholine receptors (nAChR) and thus inhibit them. Both the globular (with C1-C3; C2-C4 disulfide pattern) and ribbon (C1-C4; C2-C3) isomers reversibly inhibit human muscle-type alpha-1-beta-1-delta-epsilon/CHRNA1-CHRNB1-CHRND-CHRNE nAChRs (IC(50)=116 nM and IC(50)=643 nM, respectively). Both isomers also inhibit alpha-7/CHRNA7 and alpha-9-alpha-10/CHRNA9-CHRNA10 (IC(50)=1113 nM by globular isomer) nAChRs. The chain is Alpha-conotoxin GIB from Conus geographus (Geography cone).